Here is a 214-residue protein sequence, read N- to C-terminus: Probable nicotinate-nucleotide adenylyltransferase (214 aa).

This sequence belongs to the NadD family.

It catalyses the reaction nicotinate beta-D-ribonucleotide + ATP + H(+) = deamido-NAD(+) + diphosphate. It participates in cofactor biosynthesis; NAD(+) biosynthesis; deamido-NAD(+) from nicotinate D-ribonucleotide: step 1/1. Functionally, catalyzes the reversible adenylation of nicotinate mononucleotide (NaMN) to nicotinic acid adenine dinucleotide (NaAD). The chain is Probable nicotinate-nucleotide adenylyltransferase from Mycobacterium bovis (strain ATCC BAA-935 / AF2122/97).